A 236-amino-acid polypeptide reads, in one-letter code: 5'-methylthioadenosine/S-adenosylhomocysteine nucleosidase (236 aa).

Glu-12 acts as the Proton acceptor in catalysis. Substrate is bound by residues Gly-78, Ile-153, and 174 to 175 (ME). Catalysis depends on Asp-198, which acts as the Proton donor.

This sequence belongs to the PNP/UDP phosphorylase family. MtnN subfamily.

The catalysed reaction is S-adenosyl-L-homocysteine + H2O = S-(5-deoxy-D-ribos-5-yl)-L-homocysteine + adenine. It carries out the reaction S-methyl-5'-thioadenosine + H2O = 5-(methylsulfanyl)-D-ribose + adenine. It catalyses the reaction 5'-deoxyadenosine + H2O = 5-deoxy-D-ribose + adenine. The protein operates within amino-acid biosynthesis; L-methionine biosynthesis via salvage pathway; S-methyl-5-thio-alpha-D-ribose 1-phosphate from S-methyl-5'-thioadenosine (hydrolase route): step 1/2. In terms of biological role, catalyzes the irreversible cleavage of the glycosidic bond in both 5'-methylthioadenosine (MTA) and S-adenosylhomocysteine (SAH/AdoHcy) to adenine and the corresponding thioribose, 5'-methylthioribose and S-ribosylhomocysteine, respectively. Also cleaves 5'-deoxyadenosine, a toxic by-product of radical S-adenosylmethionine (SAM) enzymes, into 5-deoxyribose and adenine. The protein is 5'-methylthioadenosine/S-adenosylhomocysteine nucleosidase of Shewanella baltica (strain OS185).